The chain runs to 489 residues: Zinc finger protein 58 (489 aa).

The KRAB domain maps to 2-73 (LSFWDVAIDF…KRQAAAAVHP (72 aa)). A C2H2-type 1; degenerate zinc finger spans residues 78-100 (NKCKDFSKAFFCKSLLTQHQRIR). 14 C2H2-type zinc fingers span residues 106-128 (FKCEECGKAFNNRSNLSEHKRIH), 134-156 (YKCEECGKAFRIRSKLSTHQRVH), 162-184 (YKCEECGKAFNSHSNLSEHKRIH), 190-212 (YKCEECGKAFSTRSTYYRHQKNH), 218-240 (YKCEECAKEFSYPSLLKVHQRIH), 246-268 (YKCEECGKPFYCPLLLKKHQIIH), 274-296 (YKCAECGKAFHYPSLLKRHQRIH), 302-324 (CKCKDCDRAFYSSAFLKRHQRIH), 330-352 (YKCGECGKRFCSFPHLQYHQRFH), 358-380 (YKCEQCGKTFSTLSYLPWHKLRH), 386-408 (YKCEKCGKMFYSTLDLKKHQKIH), 410-432 (YKCGECHYGFPNYAALTAHQRVH), 438-460 (HVCEQCGKDFSRIDSLNQHQLVH), and 466-488 (YKCEKCGKCFYRSSSLKRHQGIH).

This sequence belongs to the krueppel C2H2-type zinc-finger protein family. In terms of tissue distribution, expressed in liver, testis and, at considerably lower levels, in brain, spleen and heart.

It localises to the nucleus. Functionally, may have a role during differentiation processes. The sequence is that of Zinc finger protein 58 (Zfp58) from Mus musculus (Mouse).